The primary structure comprises 1023 residues: 2-oxoglutarate dehydrogenase complex component E1 (1023 aa).

A mitochondrion-targeting transit peptide spans 1-40 (MFHLRTCAAKLRPLTASQTVKTFSQNRPAAARTFQQIRCY). An N6-succinyllysine modification is found at Lys-74. Ser-100 carries the phosphoserine modification. His-143, Asp-156, and Asp-158 together coordinate Ca(2+). Arg-312 provides a ligand contact to thiamine diphosphate. Lys-401 is subject to N6-acetyllysine. Positions 411, 444, and 446 each coordinate thiamine diphosphate. Asp-411, Asn-444, and Ile-446 together coordinate Mg(2+). Residue Lys-534 forms a Glycyl lysine isopeptide (Lys-Gly) (interchain with G-Cter in ubiquitin) linkage. Lys-564 carries the post-translational modification N6-succinyllysine. Residue Gln-676 participates in thiamine diphosphate binding. The residue at position 970 (Lys-970) is an N6-acetyllysine.

This sequence belongs to the alpha-ketoglutarate dehydrogenase family. In terms of assembly, homodimer. The 2-oxoglutarate dehydrogenase complex is composed of OGDH (2-oxoglutarate dehydrogenase; E1), DLST (dihydrolipoamide succinyltransferase; E2), DLD (dihydrolipoamide dehydrogenase; E3) and the assembly factor KGD4. It contains multiple copies of the three enzymatic components (E1, E2 and E3). In the nucleus, the 2-oxoglutarate dehydrogenase complex associates with KAT2A. Interacts with ABHD11; this interaction maintains the functional lipoylation of the 2-oxoglutarate dehydrogenase complex. Requires thiamine diphosphate as cofactor. Mg(2+) is required as a cofactor.

The protein resides in the mitochondrion. It is found in the nucleus. The enzyme catalyses N(6)-[(R)-lipoyl]-L-lysyl-[protein] + 2-oxoglutarate + H(+) = N(6)-[(R)-S(8)-succinyldihydrolipoyl]-L-lysyl-[protein] + CO2. Its activity is regulated as follows. Calcium ions and ADP stimulate, whereas ATP and NADH reduce catalytic activity. In terms of biological role, 2-oxoglutarate dehydrogenase (E1o) component of the 2-oxoglutarate dehydrogenase complex (OGDHC). Participates in the first step, rate limiting for the overall conversion of 2-oxoglutarate to succinyl-CoA and CO(2) catalyzed by the whole OGDHC. Catalyzes the irreversible decarboxylation of 2-oxoglutarate (alpha-ketoglutarate) via the thiamine diphosphate (ThDP) cofactor and subsequent transfer of the decarboxylated acyl intermediate on an oxidized dihydrolipoyl group that is covalently amidated to the E2 enzyme (dihydrolipoyllysine-residue succinyltransferase or DLST). Plays a key role in the Krebs (citric acid) cycle, which is a common pathway for oxidation of fuel molecules, including carbohydrates, fatty acids, and amino acids. Can catalyze the decarboxylation of 2-oxoadipate in vitro, but at a much lower rate than 2-oxoglutarate. Mainly active in the mitochondrion. A fraction of the 2-oxoglutarate dehydrogenase complex also localizes in the nucleus and is required for lysine succinylation of histones: associates with KAT2A on chromatin and provides succinyl-CoA to histone succinyltransferase KAT2A. The protein is 2-oxoglutarate dehydrogenase complex component E1 of Pongo abelii (Sumatran orangutan).